Reading from the N-terminus, the 420-residue chain is Signal recognition particle receptor FtsY (420 aa).

The span at 28–62 (DLDRAMGKVAPDNKKTRDAKAAADARLAAEAEEAK) shows a compositional bias: basic and acidic residues. Residues 28–118 (DLDRAMGKVA…PETPESVGSR (91 aa)) are disordered. The segment covering 63-104 (AATAAEPAKSAESAKAEPAPAAQAEPEPAAAPKPESQPASKP) has biased composition (low complexity). GTP-binding positions include 227–234 (GVNGTGKT), 310–314 (DTAGR), and 372–375 (SKLD).

This sequence belongs to the GTP-binding SRP family. FtsY subfamily. Part of the signal recognition particle protein translocation system, which is composed of SRP and FtsY.

The protein localises to the cell membrane. Its subcellular location is the cytoplasm. The enzyme catalyses GTP + H2O = GDP + phosphate + H(+). Functionally, involved in targeting and insertion of nascent membrane proteins into the cytoplasmic membrane. Acts as a receptor for the complex formed by the signal recognition particle (SRP) and the ribosome-nascent chain (RNC). This is Signal recognition particle receptor FtsY from Bifidobacterium longum (strain NCC 2705).